We begin with the raw amino-acid sequence, 132 residues long: Large ribosomal subunit protein bL17 (132 aa).

It belongs to the bacterial ribosomal protein bL17 family. As to quaternary structure, part of the 50S ribosomal subunit. Contacts protein L32.

The sequence is that of Large ribosomal subunit protein bL17 from Cellvibrio japonicus (strain Ueda107) (Pseudomonas fluorescens subsp. cellulosa).